Reading from the N-terminus, the 467-residue chain is DNA repair protein RadA (467 aa).

The segment at 10 to 27 (CQNCGAVHSRWAGKCDSC) adopts a C4-type zinc-finger fold. Residue 98-105 (GDPGIGKS) coordinates ATP. The RadA KNRFG motif signature appears at 260–264 (KNRFG). The segment at 359–467 (DVYLNVAGGY…RIAASGAGKK (109 aa)) is lon-protease-like.

It belongs to the RecA family. RadA subfamily.

DNA-dependent ATPase involved in processing of recombination intermediates, plays a role in repairing DNA breaks. Stimulates the branch migration of RecA-mediated strand transfer reactions, allowing the 3' invading strand to extend heteroduplex DNA faster. Binds ssDNA in the presence of ADP but not other nucleotides, has ATPase activity that is stimulated by ssDNA and various branched DNA structures, but inhibited by SSB. Does not have RecA's homology-searching function. In Brucella abortus (strain 2308), this protein is DNA repair protein RadA.